The chain runs to 265 residues: Undecaprenyl-diphosphatase (265 aa).

7 consecutive transmembrane segments (helical) span residues 42–62, 82–102, 108–128, 143–163, 181–201, 221–241, and 248–264; these read AATFEVAIQLGAILAVVVLYW, GIMLLLLTSLPASVLGLAAHS, LFTPSTVAIALAVGAIFMLLV, MSPALALGIGCFQCLALWPGF, GLAAEYSFIAAVPIMFAATGY, GFVVSFLSAWAAVKLFIALVG, and FAWYRLAIAPLVYYFMA.

The protein belongs to the UppP family.

It localises to the cell inner membrane. The enzyme catalyses di-trans,octa-cis-undecaprenyl diphosphate + H2O = di-trans,octa-cis-undecaprenyl phosphate + phosphate + H(+). Catalyzes the dephosphorylation of undecaprenyl diphosphate (UPP). Confers resistance to bacitracin. This is Undecaprenyl-diphosphatase from Nitratidesulfovibrio vulgaris (strain DP4) (Desulfovibrio vulgaris).